A 368-amino-acid chain; its full sequence is Chaperone protein DnaJ (368 aa).

A J domain is found at 5–75 (DFYKILGVEK…TKRKQYDKFG (71 aa)). The CR-type zinc finger occupies 139-222 (GKEISQKLTK…CRGKTIVETK (84 aa)). The Zn(2+) site is built by C152, C155, C169, C172, C196, C199, C210, and C213. 4 CXXCXGXG motif repeats span residues 152–159 (CDNCKGSG), 169–176 (CYNCQGRG), 196–203 (CSVCLGSG), and 210–217 (CKKCRGKT).

It belongs to the DnaJ family. As to quaternary structure, homodimer. Zn(2+) serves as cofactor.

The protein localises to the cytoplasm. Its function is as follows. Participates actively in the response to hyperosmotic and heat shock by preventing the aggregation of stress-denatured proteins and by disaggregating proteins, also in an autonomous, DnaK-independent fashion. Unfolded proteins bind initially to DnaJ; upon interaction with the DnaJ-bound protein, DnaK hydrolyzes its bound ATP, resulting in the formation of a stable complex. GrpE releases ADP from DnaK; ATP binding to DnaK triggers the release of the substrate protein, thus completing the reaction cycle. Several rounds of ATP-dependent interactions between DnaJ, DnaK and GrpE are required for fully efficient folding. Also involved, together with DnaK and GrpE, in the DNA replication of plasmids through activation of initiation proteins. This chain is Chaperone protein DnaJ, found in Mesomycoplasma hyopneumoniae (strain 232) (Mycoplasma hyopneumoniae).